A 496-amino-acid polypeptide reads, in one-letter code: probable leucine aminopeptidase 2 (496 aa).

The first 16 residues, 1 to 16 (MRSLLWASLLSGVLAG), serve as a signal peptide directing secretion. The 95-residue stretch at 111 to 205 (PSVEVTADVA…SLEDGQKLIK (95 aa)) folds into the PA domain. The N-linked (GlcNAc...) asparagine glycan is linked to Asn224. Zn(2+) is bound by residues His248 and Asp260. Glu292 functions as the Proton acceptor in the catalytic mechanism. Zn(2+) is bound at residue Glu293. The N-linked (GlcNAc...) asparagine glycan is linked to Asn307. Zn(2+) is bound at residue Asp321. Residues Asn341 and Asn402 are each glycosylated (N-linked (GlcNAc...) asparagine). His419 serves as a coordination point for Zn(2+). Asn424 and Asn458 each carry an N-linked (GlcNAc...) asparagine glycan. A disordered region spans residues 475 to 496 (KRAPKTHAHVSGSGCWHSQVEA).

This sequence belongs to the peptidase M28 family. M28A subfamily. Monomer. Zn(2+) is required as a cofactor.

The protein localises to the secreted. In terms of biological role, extracellular aminopeptidase that releases a wide variety of amino acids from natural peptides. This Aspergillus oryzae (strain ATCC 42149 / RIB 40) (Yellow koji mold) protein is probable leucine aminopeptidase 2 (lap2).